The following is a 485-amino-acid chain: Cytosol non-specific dipeptidase (485 aa).

Histidine 76 provides a ligand contact to Zn(2+). Aspartate 78 is an active-site residue. Aspartate 115 serves as a coordination point for Zn(2+). Catalysis depends on glutamate 145, which acts as the Proton acceptor. Zn(2+)-binding residues include glutamate 146 and aspartate 169. Lysine 296 is subject to N6-acetyllysine. Histidine 457 contacts Zn(2+).

The protein belongs to the peptidase M20C family. Zn(2+) is required as a cofactor. Co(2+) serves as cofactor.

The enzyme catalyses Hydrolysis of dipeptides, preferentially hydrophobic dipeptides including prolyl amino acids.. Its activity is regulated as follows. Inhibited by metal chelators. In terms of biological role, dipeptidase with broad substrate specificity. Requires dipeptide substrates with an unblocked N-terminus and the amino group in the alpha or beta position. Non-protein amino acids and proline are not accepted in the C-terminal position, whereas some dipeptide amides and formyl amino acids are hydrolyzed. Also shows cysteinylglycinase activity, which is sufficient for E.coli to utilize cysteinylglycine as a cysteine source. The protein is Cytosol non-specific dipeptidase (pepD) of Escherichia coli (strain K12).